The following is a 359-amino-acid chain: E3 ubiquitin-protein ligase RNF146 (359 aa).

The segment at 37–75 (CAICLQTCVHPVSLPCKHVFCYLCVKGASWLGKRCALCR) adopts an RING-type zinc-finger fold. Glycyl lysine isopeptide (Lys-Gly) (interchain with G-Cter in ubiquitin) cross-links involve residues Lys-85 and Lys-95. Residues 92-168 (EELKAASRGN…EHGRRRKIKR (77 aa)) enclose the WWE domain. A glycoprotein-binding residues include Tyr-108, Arg-111, and Trp-115. Lys-131 participates in a covalent cross-link: Glycyl lysine isopeptide (Lys-Gly) (interchain with G-Cter in ubiquitin). A glycoprotein is bound by residues Tyr-145, Gln-154, Arg-164, and Lys-176. Lys-176 participates in a covalent cross-link: Glycyl lysine isopeptide (Lys-Gly) (interchain with G-Cter in ubiquitin). Positions 254–359 (GDNTAERSHR…PDGQCTVTEV (106 aa)) are disordered. Acidic residues predominate over residues 284–298 (SIEETESDASSDSED). 2 positions are modified to phosphoserine: Ser-290 and Ser-294. The span at 306 to 323 (HSLTQQRLLVSNANQTVP) shows a compositional bias: polar residues.

In terms of assembly, can form homooligomers. Interacts with PARsylated AXIN1, AXIN2, BLZF1, CASC3, H1-2, IPO7, LIG3, NCL, PARP1, XRCC1, XRCC5 and XRCC6. Interacts with DDB1, DHX15, IQGAP1, LRPPRC, PARP2, PRKDC, RUVBL2, TNKS1 and TNKS2. Binding often leads to interactor ubiquitination, in the presence of the appropriate E1 and E2 enzymes, and proteasomal degradation. Ubiquitinated; autoubiquitinated. Polyubiquitinated in the presence of UBE2D1, UBE2D2 and UBE2D3. Multimonoubiquitinated in the presence of UBE2E1. Not ubiquitinated in the presence of UBE2H, CDC34, UBE2L3, UBE2L6, nor UBE2C. In the absence of PAR, autoubiquitination occurs on Lys-85, Lys-95 and Lys-176 via 'Lys-11' and 'Lys-48' ubiquitin linkages. In the presence of PAR, Lys-131 and Lys-176 are ubiquitinated via 'Lys-6', 'Lys-33' and 'Lys-48' ubiquitin linkages. Autoubiquitination is enhanced upon PAR-binding. In terms of tissue distribution, ubiquitously expressed. Up-regulated in brains from patients with Alzheimer disease.

Its subcellular location is the cytoplasm. It is found in the cytosol. It localises to the nucleus. It carries out the reaction S-ubiquitinyl-[E2 ubiquitin-conjugating enzyme]-L-cysteine + [acceptor protein]-L-lysine = [E2 ubiquitin-conjugating enzyme]-L-cysteine + N(6)-ubiquitinyl-[acceptor protein]-L-lysine.. Its pathway is protein modification; protein ubiquitination. In terms of biological role, E3 ubiquitin-protein ligase that specifically binds poly-ADP-ribosylated (PARsylated) proteins and mediates their ubiquitination and subsequent degradation. May regulate many important biological processes, such as cell survival and DNA damage response. Acts as an activator of the Wnt signaling pathway by mediating the ubiquitination of PARsylated AXIN1 and AXIN2, 2 key components of the beta-catenin destruction complex. Acts in cooperation with tankyrase proteins (TNKS and TNKS2), which mediate PARsylation of target proteins AXIN1, AXIN2, BLZF1, CASC3, TNKS and TNKS2. Recognizes and binds tankyrase-dependent PARsylated proteins via its WWE domain and mediates their ubiquitination, leading to their degradation. Different ubiquitin linkage types have been observed: TNKS2 undergoes ubiquitination at 'Lys-48' and 'Lys-63', while AXIN1 is only ubiquitinated at 'Lys-48'. May regulate TNKS and TNKS2 subcellular location, preventing aggregation at a centrosomal location. Neuroprotective protein. Protects the brain against N-methyl-D-aspartate (NMDA) receptor-mediated glutamate excitotoxicity and ischemia, by interfering with PAR-induced cell death, called parthanatos. Prevents nuclear translocation of AIFM1 in a PAR-binding dependent manner. Does not affect PARP1 activation. Protects against cell death induced by DNA damaging agents, such as N-methyl-N-nitro-N-nitrosoguanidine (MNNG) and rescues cells from G1 arrest. Promotes cell survival after gamma-irradiation. Facilitates DNA repair. This is E3 ubiquitin-protein ligase RNF146 (RNF146) from Homo sapiens (Human).